A 403-amino-acid chain; its full sequence is 3-oxoacyl-[acyl-carrier-protein] synthase 2 (403 aa).

Residues 1–403 (VITGMGALSP…GGHNAVLVFK (403 aa)) form the Ketosynthase family 3 (KS3) domain. Catalysis depends on for beta-ketoacyl synthase activity residues Cys158, His297, and His334.

Belongs to the thiolase-like superfamily. Beta-ketoacyl-ACP synthases family.

It carries out the reaction a fatty acyl-[ACP] + malonyl-[ACP] + H(+) = a 3-oxoacyl-[ACP] + holo-[ACP] + CO2. It catalyses the reaction (9Z)-hexadecenoyl-[ACP] + malonyl-[ACP] + H(+) = 3-oxo-(11Z)-octadecenoyl-[ACP] + holo-[ACP] + CO2. It participates in lipid metabolism; fatty acid biosynthesis. In terms of biological role, involved in the type II fatty acid elongation cycle. Catalyzes the elongation of a wide range of acyl-ACP by the addition of two carbons from malonyl-ACP to an acyl acceptor. Can efficiently catalyze the conversion of palmitoleoyl-ACP (cis-hexadec-9-enoyl-ACP) to cis-vaccenoyl-ACP (cis-octadec-11-enoyl-ACP), an essential step in the thermal regulation of fatty acid composition. The sequence is that of 3-oxoacyl-[acyl-carrier-protein] synthase 2 (fabF) from Staphylococcus aureus.